A 161-amino-acid polypeptide reads, in one-letter code: Allophycocyanin beta chain (161 aa).

Residue N71 is modified to N4-methylasparagine. C81 contributes to the (2R,3E)-phycocyanobilin binding site.

The protein belongs to the phycobiliprotein family. Heterodimer of an alpha and a beta chain. In terms of processing, contains one covalently linked phycocyanobilin chromophore.

Its subcellular location is the cellular thylakoid membrane. Its function is as follows. Light-harvesting photosynthetic bile pigment-protein from the phycobiliprotein complex. Allophycocyanin has a maximum absorption at approximately 650 nanometers. The polypeptide is Allophycocyanin beta chain (apcB) (Thermosynechococcus vestitus (strain NIES-2133 / IAM M-273 / BP-1)).